A 186-amino-acid polypeptide reads, in one-letter code: Potassium-transporting ATPase KdpC subunit (186 aa).

A helical membrane pass occupies residues 10–30 (LTIITMVLCGFLFPLAITLIG).

Belongs to the KdpC family. The system is composed of three essential subunits: KdpA, KdpB and KdpC.

The protein resides in the cell membrane. Its function is as follows. Part of the high-affinity ATP-driven potassium transport (or Kdp) system, which catalyzes the hydrolysis of ATP coupled with the electrogenic transport of potassium into the cytoplasm. This subunit acts as a catalytic chaperone that increases the ATP-binding affinity of the ATP-hydrolyzing subunit KdpB by the formation of a transient KdpB/KdpC/ATP ternary complex. The protein is Potassium-transporting ATPase KdpC subunit of Staphylococcus aureus (strain COL).